Consider the following 515-residue polypeptide: Bifunctional purine biosynthesis protein PurH (515 aa).

The MGS-like domain maps to 1–145 (MTKRALISVS…KNHASVTVVV (145 aa)).

Belongs to the PurH family.

It carries out the reaction (6R)-10-formyltetrahydrofolate + 5-amino-1-(5-phospho-beta-D-ribosyl)imidazole-4-carboxamide = 5-formamido-1-(5-phospho-D-ribosyl)imidazole-4-carboxamide + (6S)-5,6,7,8-tetrahydrofolate. It catalyses the reaction IMP + H2O = 5-formamido-1-(5-phospho-D-ribosyl)imidazole-4-carboxamide. The protein operates within purine metabolism; IMP biosynthesis via de novo pathway; 5-formamido-1-(5-phospho-D-ribosyl)imidazole-4-carboxamide from 5-amino-1-(5-phospho-D-ribosyl)imidazole-4-carboxamide (10-formyl THF route): step 1/1. Its pathway is purine metabolism; IMP biosynthesis via de novo pathway; IMP from 5-formamido-1-(5-phospho-D-ribosyl)imidazole-4-carboxamide: step 1/1. This is Bifunctional purine biosynthesis protein PurH from Streptococcus pyogenes serotype M12 (strain MGAS2096).